The sequence spans 413 residues: MMIAQELGIYVVESKGGAILCLLLSLLCLGTWPALMALLERRGRLPQHTYLDYSITNFLAAIFIAFVFGGIGESTHEAPSFITQLTQIQDNWPSVLFAMAGGVGLSIGNLATQYSLAFVGLSVTEVTAASITVVVGTTVNYFLDNGLNRADILFSGVGCFMVAVCLGSAVHSSNSADIKAKLGKLSGDCETVTPEECQRLFGVEEEEEEEKEMENVKEGSAAFLIALENKRAIKVLGKSMVVGLGITFFAGLSFSLFSPLFNLATNDQWHTLKQGVPKLIVYTAFFYFSLSCFVIAVALNISFLYKPVLDSPRSSFREYLSDWNGRGWALAAGLLCGFGNGLQFMGGQAAGYAASDAVQALPLVSTFWGIYLFGEYRRSSTRTYALLVGMLVMFTVAVGLLMASAGERETRFT.

Topologically, residues 1–18 are extracellular; the sequence is MMIAQELGIYVVESKGGA. A helical transmembrane segment spans residues 19–39; the sequence is ILCLLLSLLCLGTWPALMALL. Residues 40–50 lie on the Cytoplasmic side of the membrane; the sequence is ERRGRLPQHTY. Residues 51–71 form a helical membrane-spanning segment; it reads LDYSITNFLAAIFIAFVFGGI. The Extracellular segment spans residues 72–91; sequence GESTHEAPSFITQLTQIQDN. The chain crosses the membrane as a helical span at residues 92–112; sequence WPSVLFAMAGGVGLSIGNLAT. Topologically, residues 113–115 are cytoplasmic; the sequence is QYS. A helical membrane pass occupies residues 116 to 136; it reads LAFVGLSVTEVTAASITVVVG. The Extracellular segment spans residues 137–149; sequence TTVNYFLDNGLNR. A helical membrane pass occupies residues 150–170; it reads ADILFSGVGCFMVAVCLGSAV. The Cytoplasmic segment spans residues 171 to 240; it reads HSSNSADIKA…RAIKVLGKSM (70 aa). 232–239 is an ATP binding site; it reads AIKVLGKS. A helical membrane pass occupies residues 241–261; that stretch reads VVGLGITFFAGLSFSLFSPLF. Residues 262–278 lie on the Extracellular side of the membrane; it reads NLATNDQWHTLKQGVPK. Residues 279-299 traverse the membrane as a helical segment; that stretch reads LIVYTAFFYFSLSCFVIAVAL. Residues 300–326 are Cytoplasmic-facing; that stretch reads NISFLYKPVLDSPRSSFREYLSDWNGR. A helical membrane pass occupies residues 327 to 347; it reads GWALAAGLLCGFGNGLQFMGG. The Extracellular segment spans residues 348–352; the sequence is QAAGY. The chain crosses the membrane as a helical span at residues 353-373; the sequence is AASDAVQALPLVSTFWGIYLF. At 374-384 the chain is on the cytoplasmic side; the sequence is GEYRRSSTRTY. Residues 385–405 form a helical membrane-spanning segment; it reads ALLVGMLVMFTVAVGLLMASA. Residues 406 to 413 lie on the Extracellular side of the membrane; that stretch reads GERETRFT.

Belongs to the plant ureide permease (TC 2.A.7.19) family. In terms of tissue distribution, expressed in lateral roots, rosette leaves, stems, stipules, flower stigma, pedicels and the connective tissue between pollen sacks.

It is found in the membrane. Functionally, proton-coupled transporter that transports a wide spectrum of oxo derivatives of heterocyclic nitrogen compounds, including allantoin, uric acid and xanthine, but not adenine. Mediates transport of uracil and 5-fluorouracil (a toxic uracil analog). Proton-coupled transporter that transports a wide spectrum of oxo derivatives of heterocyclic nitrogen compounds, including allantoin, xanthine and uracil. This chain is Ureide permease 5, found in Arabidopsis thaliana (Mouse-ear cress).